Reading from the N-terminus, the 352-residue chain is DNA-directed RNA polymerase subunit alpha (352 aa).

Residues 1 to 236 (MTVNIRNWQE…DQLQVFVHFE (236 aa)) form an alpha N-terminal domain (alpha-NTD) region. The tract at residues 257 to 352 (SDVNQLNRFL…AKKLEQELLG (96 aa)) is alpha C-terminal domain (alpha-CTD).

This sequence belongs to the RNA polymerase alpha chain family. Homodimer. The RNAP catalytic core consists of 2 alpha, 1 beta, 1 beta' and 1 omega subunit. When a sigma factor is associated with the core the holoenzyme is formed, which can initiate transcription.

It catalyses the reaction RNA(n) + a ribonucleoside 5'-triphosphate = RNA(n+1) + diphosphate. DNA-dependent RNA polymerase catalyzes the transcription of DNA into RNA using the four ribonucleoside triphosphates as substrates. The sequence is that of DNA-directed RNA polymerase subunit alpha from Sphingopyxis alaskensis (strain DSM 13593 / LMG 18877 / RB2256) (Sphingomonas alaskensis).